The primary structure comprises 512 residues: Keratin, type I cytoskeletal 24 (512 aa).

Positions 1–21 (MFCSAQKGSCSSRVSSSGAVG) are disordered. The segment at 1 to 140 (MFCSAQKGSC…GYDGGLLSGS (140 aa)) is head. Low complexity predominate over residues 8-21 (GSCSSRVSSSGAVG). Residues 141-176 (EKQTMQDLNDRLANYLDKVRALEEANTDLECKIKDW) form a coil 1A region. The 315-residue stretch at 141–455 (EKQTMQDLND…RLLNGDGGGC (315 aa)) folds into the IF rod domain. The tract at residues 177-197 (YGKHGSVKGGSGRDYSQYYSI) is linker 1. The segment at 198–289 (IEDLKKQILS…KNHEEEMKCM (92 aa)) is coil 1B. The tract at residues 290–312 (QGSSGGDVTVEMNAAPGVDLTKL) is linker 12. The coil 2 stretch occupies residues 313–451 (LNDMRAQYEA…ETYRRLLNGD (139 aa)). A tail region spans residues 452 to 512 (GGGCDYRNLV…VSNISEVKIK (61 aa)).

It belongs to the intermediate filament family. In terms of assembly, heterotetramer of two type I and two type II keratins.

The protein is Keratin, type I cytoskeletal 24 (Krt24) of Mus musculus (Mouse).